The chain runs to 636 residues: 1-deoxy-D-xylulose-5-phosphate synthase (636 aa).

Thiamine diphosphate contacts are provided by residues H72 and 113 to 115; that span reads GHA. D144 lines the Mg(2+) pocket. Residues 145–146, N174, Y287, and E370 contribute to the thiamine diphosphate site; that span reads GA. Residue N174 coordinates Mg(2+).

This sequence belongs to the transketolase family. DXPS subfamily. As to quaternary structure, homodimer. Mg(2+) serves as cofactor. It depends on thiamine diphosphate as a cofactor.

It carries out the reaction D-glyceraldehyde 3-phosphate + pyruvate + H(+) = 1-deoxy-D-xylulose 5-phosphate + CO2. It functions in the pathway metabolic intermediate biosynthesis; 1-deoxy-D-xylulose 5-phosphate biosynthesis; 1-deoxy-D-xylulose 5-phosphate from D-glyceraldehyde 3-phosphate and pyruvate: step 1/1. In terms of biological role, catalyzes the acyloin condensation reaction between C atoms 2 and 3 of pyruvate and glyceraldehyde 3-phosphate to yield 1-deoxy-D-xylulose-5-phosphate (DXP). This is 1-deoxy-D-xylulose-5-phosphate synthase from Crocosphaera subtropica (strain ATCC 51142 / BH68) (Cyanothece sp. (strain ATCC 51142)).